A 317-amino-acid chain; its full sequence is MCPPVSVRHGAKGMSCLYGAWLYHLVHGEQMKICFACFKAAFLVVKNMLEMGDWEEGVWDAEPMELSEASSEPEEWPGLSGGEGQGHLPHGISVSAGSGAQGPQPVPTELGPQEAVPLDLGPEDAEWTQALPWRFDGLSPCSHWLIPPLSWWEIFNVSPSPGQPVLLELSPTWPMDPLEAEAWLVGLKFVFLLGGFDAICYMLSMTPCWAVRTRVQRWQVLLDPGDVRVAQLQNAPEQQDLHRWKLSVLESSELGMELVPADCSLQKGGFKVHSYLPWHNSTPESWSREPGERLLVVEVVSLRELPCFRSPSPDPHN.

The span at 64–75 (MELSEASSEPEE) shows a compositional bias: acidic residues. A disordered region spans residues 64 to 113 (MELSEASSEPEEWPGLSGGEGQGHLPHGISVSAGSGAQGPQPVPTELGPQ). An important for interaction with piRNA region spans residues 101–145 (QGPQPVPTELGPQEAVPLDLGPEDAEWTQALPWRFDGLSPCSHWL).

Interacts with UBR2. Interacts with piRNA-associated proteins DDX4, EDC4, MAEL, PIWIL1, PIWIL2, RANBP9 and TDRD6. As to expression, specifically expressed in somatic cells of male gonad lineage.

It is found in the cytoplasm. Its function is as follows. May be required during spermatogenesis, probably by participating in the repression of retrotransposable elements and prevent their mobilization. With its paralog, Tex19.1, collaborates with the Piwi-interacting RNA (piRNA) pathway, which mediates the repression of transposable elements during meiosis by forming complexes composed of piRNAs and Piwi proteins. Interacts with Piwi proteins and directly binds piRNAs, a class of 24 to 30 nucleotide RNAs that are generated by a Dicer-independent mechanism and are primarily derived from transposons and other repeated sequence elements. The chain is Testis-expressed protein 19.2 (Tex19.2) from Mus musculus (Mouse).